The following is a 179-amino-acid chain: Large ribosomal subunit protein uL5 (179 aa).

This sequence belongs to the universal ribosomal protein uL5 family. Part of the 50S ribosomal subunit; part of the 5S rRNA/L5/L18/L25 subcomplex. Contacts the 5S rRNA and the P site tRNA. Forms a bridge to the 30S subunit in the 70S ribosome.

In terms of biological role, this is one of the proteins that bind and probably mediate the attachment of the 5S RNA into the large ribosomal subunit, where it forms part of the central protuberance. In the 70S ribosome it contacts protein S13 of the 30S subunit (bridge B1b), connecting the 2 subunits; this bridge is implicated in subunit movement. Contacts the P site tRNA; the 5S rRNA and some of its associated proteins might help stabilize positioning of ribosome-bound tRNAs. The polypeptide is Large ribosomal subunit protein uL5 (Geobacillus kaustophilus (strain HTA426)).